Here is a 232-residue protein sequence, read N- to C-terminus: U2 small nuclear ribonucleoprotein B'' (232 aa).

The 80-residue stretch at 10 to 89 (QSIYIQNLNE…KPMRLQYAKA (80 aa)) folds into the RRM 1 domain. The segment at 100–157 (TFVPKDKKRKQEEKVERKREDSQRPNTANGPSANGPSANNGVPAPSFQPSGQETMPPN) is disordered. Residues 108-122 (RKQEEKVERKREDSQ) show a composition bias toward basic and acidic residues. 2 stretches are compositionally biased toward polar residues: residues 123-139 (RPNT…SANN) and 146-156 (FQPSGQETMPP). An RRM 2 domain is found at 158–232 (NILFIQNLPH…NPMVISFAKK (75 aa)).

Belongs to the RRM U1 A/B'' family. Component of the spliceosome where it is associated with snRNP U2.

The protein localises to the nucleus. Its subcellular location is the cajal body. It localises to the nucleoplasm. It is found in the cytoplasm. Its function is as follows. Involved in nuclear pre-mRNA splicing. This chain is U2 small nuclear ribonucleoprotein B'' (U2B''), found in Arabidopsis thaliana (Mouse-ear cress).